The primary structure comprises 1043 residues: MSKIKPLSKSSQDLSLLTSDIASFASSIGLASALPSSGFNDTDFRKPAKSKTQKRKKPKKDQQHKDEDEEGEPKSNIGNEKGKDFGARKQNKDAPVKQTLQPKPKPGFLSIDDESTGYKKKRFDEFKSLPKLPLVKASLLSSEWYNDAAEFEEKVFGGRKVAVANKEDFKGVVEKKRELGERLMWQYAEDFATSKGKGGDMKMVISAQKSGTVADKITAFEIMVGENPIANMRSLDALLGMVTSKVGKRFAFKGLKALSEILIRLLPDRKLKSLLQRPLNIIPENKDGYSLLLFWYWEDCLKQRYERFVTALDESSKDMLPELKDKALKTIYFMLTSKSEQERKLLVSLVNKLGDPQNKSASNADYHLTNLLADHPNMKAVVIDEVDSFLFRPHLGLRAKYHAVNFLSQIRLSHKGEDPKVAKRLIDVYFALFKVLTTEANRKQGADDKGAADKKKSNPKDTKQEVSTDSPIELDSRILSALLTGVNRAFPYVSTDEADDIIESQTPVLFKLVHSANFNVGVQSLMLLDKISSKNKIVSDRFYRALYSKLLLPSAMNSSKAEMFIGLLLRAMKNDINIKRVAAFSKRVLQVALQQPPQYACGCLFLLSEVLKSRPPLWKMVVQRESVEEEEDIEHFEDVIEGDDVDPNKKAENDENVVEVDHDGVEKSSRDGDSSSDDEEALAIRLSDEEDDNASDDSEELIRNETPQLEEVMEVSNDMEKRSQPPMRPSSLPGGYDPRHREPSYCNADRASWWELGVLSKHAHPSVATMAGTLLSGTNIVYNGNPLNDLSLTAFLDKFMEKKPKQNTWHGGSQIEPSKKLDMSNRVIGAEILSLAEGDVAPEDLVFHKFYVNKMTSTKQSKKKKKKKLPEEEAAEELYDVNDGDGGENYDSDVEFEAGDESDNEEIENMLDDVDDNAVEEEGGEYDYDDLDGVAGEDDEELVADVSDAEMDTDMDMDLIDDEDDNNVDDDGTGDGGDDDSDGDDGRSKKKKKEKRKRKSPFASLEEYKHLIDQDEKEDSKTKRKATSEPTKKKKKKKSKASE.

Disordered stretches follow at residues Ser32–Asp113, Gln444–Asp469, Asp632–Asp737, and Ser861–Glu1043. The short motif at Phe44–Lys51 is the Nuclear localization signal 1 element. Positions Pro47–Lys59 are enriched in basic residues. 2 stretches are compositionally biased toward basic and acidic residues: residues Glu80–Pro95 and Gln444–Val466. A Nuclear localization signal 2 motif is present at residues Asn441–Asp448. Residues Asp632–Val645 are compositionally biased toward acidic residues. The segment covering Asp646 to Asp673 has biased composition (basic and acidic residues). Acidic residues-rich tracts occupy residues Asp688–Glu699 and Glu872–Gly983. A compositionally biased stretch (basic residues) spans Ser988–Ser1000. Over residues Glu1006–Thr1031 the composition is skewed to basic and acidic residues. The short motif at Thr1022 to Glu1029 is the Nuclear localization signal 3 element. The segment covering Lys1032–Glu1043 has biased composition (basic residues).

This sequence belongs to the CBF/MAK21 family. As to quaternary structure, interacts with RBL in both the nucleolus and nucleoplasm. Binds to NOC2. In terms of tissue distribution, mainly expressed in actively dividing tissues (e.g. root tips, lateral root primordia, shoot apices, young leaves, inflorescences and pollen grains) through the plant, including roots, stems, leaves, inflorescences, siliques and seedlings, and in gametophytes.

Its subcellular location is the nucleus. It localises to the nucleolus. In terms of biological role, together with NOC2, probably involved in pre-ribosome export from the nucleus to the cytoplasm. Required for coordinated cell cycle progression during female gametophyte and pollen development. This is Protein SLOW WALKER 2 from Arabidopsis thaliana (Mouse-ear cress).